A 208-amino-acid polypeptide reads, in one-letter code: Small ribosomal subunit protein uS4 (208 aa).

Residues 98-159 (RRLDNVAYRL…KSRKVAAISE (62 aa)) enclose the S4 RNA-binding domain.

This sequence belongs to the universal ribosomal protein uS4 family. Part of the 30S ribosomal subunit. Contacts protein S5. The interaction surface between S4 and S5 is involved in control of translational fidelity.

One of the primary rRNA binding proteins, it binds directly to 16S rRNA where it nucleates assembly of the body of the 30S subunit. Functionally, with S5 and S12 plays an important role in translational accuracy. This Geobacter sp. (strain M21) protein is Small ribosomal subunit protein uS4.